The sequence spans 327 residues: COP9 signalosome complex subunit 7 (327 aa).

In terms of domain architecture, PCI spans 4 to 165 (VHHRALDALQ…NPPTVNVTSV (162 aa)). Disordered stretches follow at residues 233–260 (GGEQ…AGWK) and 276–327 (GGSN…GKKS). Residues 236-255 (QLQGGNPGQGQGQGQGGLGK) show a composition bias toward gly residues. Over residues 315 to 327 (GARHSKRFLGKKS) the composition is skewed to basic residues.

This sequence belongs to the CSN7/EIF3M family. CSN7 subfamily. Component of the COP9 signalosome (CSN) complex. In terms of tissue distribution, present in uninduced vegetative hyphae, induced conidiating cultures and in both conidiospores and ascospores.

The protein localises to the cytoplasm. Its subcellular location is the nucleus. In terms of biological role, component of the COP9 signalosome (CSN) complex that acts as an regulator of the ubiquitin (Ubl) conjugation pathway by mediating the deneddylation of the cullin subunit of SCF-type E3 ubiquitin-protein ligase complexes. The CSN complex seems to link protein degradation to sexual development. May be required for sporulation only at elevated temperatures. The polypeptide is COP9 signalosome complex subunit 7 (csnG) (Emericella nidulans (strain FGSC A4 / ATCC 38163 / CBS 112.46 / NRRL 194 / M139) (Aspergillus nidulans)).